The chain runs to 1057 residues: Self-sufficient cytochrome P450 monooxygenase CYP505E3 (1057 aa).

Cysteine 403 provides a ligand contact to heme. Residues 465 to 488 are disordered; the sequence is PSAAPFSSHARETTNASLPASPGT. Residues 494–634 enclose the Flavodoxin-like domain; sequence MYVLYGSNTG…AFEAWETKLW (141 aa). Residues 500 to 504 and 578 to 610 each bind FMN; these read SNTGT and VFGC…QRLV. Positions 671 to 900 constitute an FAD-binding FR-type domain; that stretch reads HDAALGTVIE…RASNAAFHLP (230 aa).

The protein in the N-terminal section; belongs to the cytochrome P450 family. It depends on FAD as a cofactor. FMN serves as cofactor. The cofactor is heme.

The catalysed reaction is 2 oxidized [cytochrome P450] + NADPH = 2 reduced [cytochrome P450] + NADP(+) + H(+). It carries out the reaction an organic molecule + reduced [NADPH--hemoprotein reductase] + O2 = an alcohol + oxidized [NADPH--hemoprotein reductase] + H2O + H(+). The enzyme catalyses dodecan-1-ol + reduced [NADPH--hemoprotein reductase] + O2 = 1,5-dodecanediol + oxidized [NADPH--hemoprotein reductase] + H2O + H(+). It catalyses the reaction dodecan-1-ol + reduced [NADPH--hemoprotein reductase] + O2 = 1,6-dodecanediol + oxidized [NADPH--hemoprotein reductase] + H2O + H(+). Its function is as follows. Self-sufficient cytochrome P450 monooxygenase that catalyzes the regioselective in-chain hydroxylation of fatty alcohols (C9-15) as well as fatty acids (C9-15) at the omega-1 to omega-7 or omega-1 to omega-6 positions, respectively. Is also able to convert naphthalene to 1-naphthol and 1-naphthol further to 1,3-dihydroxynaphthalene. The polypeptide is Self-sufficient cytochrome P450 monooxygenase CYP505E3 (Phanerodontia chrysosporium (White-rot fungus)).